Consider the following 448-residue polypeptide: Exodeoxyribonuclease 7 large subunit (448 aa).

The protein belongs to the XseA family. Heterooligomer composed of large and small subunits.

Its subcellular location is the cytoplasm. It catalyses the reaction Exonucleolytic cleavage in either 5'- to 3'- or 3'- to 5'-direction to yield nucleoside 5'-phosphates.. Bidirectionally degrades single-stranded DNA into large acid-insoluble oligonucleotides, which are then degraded further into small acid-soluble oligonucleotides. This chain is Exodeoxyribonuclease 7 large subunit, found in Nitrosomonas europaea (strain ATCC 19718 / CIP 103999 / KCTC 2705 / NBRC 14298).